The primary structure comprises 451 residues: Amino-acid acetyltransferase (451 aa).

Positions 305 to 451 constitute an N-acetyltransferase domain; the sequence is EYLREATLDD…RRSMVLMKKL (147 aa).

This sequence belongs to the acetyltransferase family. ArgA subfamily.

Its subcellular location is the cytoplasm. The enzyme catalyses L-glutamate + acetyl-CoA = N-acetyl-L-glutamate + CoA + H(+). The protein operates within amino-acid biosynthesis; L-arginine biosynthesis; N(2)-acetyl-L-ornithine from L-glutamate: step 1/4. In Ralstonia nicotianae (strain ATCC BAA-1114 / GMI1000) (Ralstonia solanacearum), this protein is Amino-acid acetyltransferase (argA).